A 638-amino-acid chain; its full sequence is Exocyst complex component EXO70A1 (638 aa).

Residues 163–190 form a disordered region; sequence FDGLPNSLRPSSDGDGGGKPHGGHHNDD.

This sequence belongs to the EXO70 family. The exocyst complex is composed of SEC3, SEC5, SEC6, SEC8, SEC10, EXO70A1 and EXO84B. Interacts with SEC3A and EXO84B. Co-localizes with FPP3/VETH1, FPP2/VETH2 and COG2 in vesicle-like small motile compartments. May interact with COG2.

It is found in the cytoplasm. The protein resides in the cytosol. The protein localises to the cytoskeleton. Its subcellular location is the phragmoplast. It localises to the cell membrane. It is found in the secreted. The protein resides in the cell wall. In terms of biological role, component of the exocyst complex involved in the docking of exocytic vesicles with fusion sites on the plasma membrane during regulated or polarized secretion. Involved in polarized cell growth and organ morphogenesis. Involved in polarized cell growth and organ morphogenesis. During cytokinesis, involved in cell plate initiation, cell plate maturation and formation of new primary cell wall. Participates in polarized pectin delivery required for the polarized development of the mucilage-producing volcano cells of the seed coat. Involved in the recycling and localization of auxin efflux carriers PIN1 and PIN2, and thus in polar auxin transport regulation. Functions in vesicle trafficking in tracheary elements to regulate patterned secondary cell wall (SCW) thickening. The chain is Exocyst complex component EXO70A1 from Arabidopsis thaliana (Mouse-ear cress).